The primary structure comprises 378 residues: Ribosomal RNA large subunit methyltransferase G (378 aa).

Belongs to the methyltransferase superfamily. RlmG family.

The protein resides in the cytoplasm. It catalyses the reaction guanosine(1835) in 23S rRNA + S-adenosyl-L-methionine = N(2)-methylguanosine(1835) in 23S rRNA + S-adenosyl-L-homocysteine + H(+). In terms of biological role, specifically methylates the guanine in position 1835 (m2G1835) of 23S rRNA. This is Ribosomal RNA large subunit methyltransferase G from Shigella boydii serotype 18 (strain CDC 3083-94 / BS512).